Here is a 147-residue protein sequence, read N- to C-terminus: Antiholin-like protein LrgA (147 aa).

The next 4 membrane-spanning stretches (helical) occupy residues 12–32 (PAHF…SKII), 35–55 (FMPI…VLLC), 74–94 (NIGL…GVIS), and 98–118 (FLII…TGYV).

The protein belongs to the CidA/LrgA family. LrgA subfamily.

It is found in the cell membrane. In terms of biological role, inhibits the expression or activity of extracellular murein hydrolases by interacting, possibly with LrgB, with the holin-like proteins CidA and/or CidB. The LrgAB and CidAB proteins may affect the proton motive force of the membrane. May be involved in programmed cell death (PCD), possibly triggering PCD in response to antibiotics and environmental stresses. This chain is Antiholin-like protein LrgA, found in Staphylococcus aureus (strain USA300).